The sequence spans 545 residues: ATP synthase subunit alpha (545 aa).

173–180 (GDRQTGKT) is an ATP binding site.

The protein belongs to the ATPase alpha/beta chains family. F-type ATPases have 2 components, CF(1) - the catalytic core - and CF(0) - the membrane proton channel. CF(1) has five subunits: alpha(3), beta(3), gamma(1), delta(1), epsilon(1). CF(0) has three main subunits: a(1), b(2) and c(9-12). The alpha and beta chains form an alternating ring which encloses part of the gamma chain. CF(1) is attached to CF(0) by a central stalk formed by the gamma and epsilon chains, while a peripheral stalk is formed by the delta and b chains.

It is found in the cell membrane. It catalyses the reaction ATP + H2O + 4 H(+)(in) = ADP + phosphate + 5 H(+)(out). Produces ATP from ADP in the presence of a proton gradient across the membrane. The alpha chain is a regulatory subunit. This Paenarthrobacter aurescens (strain TC1) protein is ATP synthase subunit alpha.